We begin with the raw amino-acid sequence, 637 residues long: Early transcription factor 70 kDa subunit (637 aa).

A Helicase ATP-binding domain is found at 32–185 (RTIIDENRSV…GHIIDLMSEE (154 aa)). 45 to 52 (HIMGSGKT) contacts ATP. Residues 135 to 138 (DEAH) carry the DEXH box motif. Positions 327-507 (KFKYFINRIQ…VLPFDIKKLL (181 aa)) constitute a Helicase C-terminal domain.

It belongs to the helicase family. VETF subfamily. Heterodimer of a 70 kDa and a 82 kDa subunit. Part of the early transcription complex composed of ETF, RAP94/OPG109, and the DNA-directed RNA polymerase.

The protein localises to the virion. In terms of biological role, acts with RNA polymerase to initiate transcription from early gene promoters. Is recruited by the RPO-associated protein of 94 kDa RAP94/OPG109 to form the early transcription complex, which also contains the core RNA polymerase. ETF heterodimer binds to early gene promoters. The sequence is that of Early transcription factor 70 kDa subunit (OPG118) from Homo sapiens (Human).